A 265-amino-acid chain; its full sequence is Indole-3-glycerol phosphate synthase (265 aa).

It belongs to the TrpC family.

The enzyme catalyses 1-(2-carboxyphenylamino)-1-deoxy-D-ribulose 5-phosphate + H(+) = (1S,2R)-1-C-(indol-3-yl)glycerol 3-phosphate + CO2 + H2O. It participates in amino-acid biosynthesis; L-tryptophan biosynthesis; L-tryptophan from chorismate: step 4/5. The chain is Indole-3-glycerol phosphate synthase from Hyphomonas neptunium (strain ATCC 15444).